The chain runs to 347 residues: Phosphate acyltransferase (347 aa).

Belongs to the PlsX family. As to quaternary structure, homodimer. Probably interacts with PlsY.

It is found in the cytoplasm. It catalyses the reaction a fatty acyl-[ACP] + phosphate = an acyl phosphate + holo-[ACP]. It participates in lipid metabolism; phospholipid metabolism. In terms of biological role, catalyzes the reversible formation of acyl-phosphate (acyl-PO(4)) from acyl-[acyl-carrier-protein] (acyl-ACP). This enzyme utilizes acyl-ACP as fatty acyl donor, but not acyl-CoA. This is Phosphate acyltransferase from Sinorhizobium fredii (strain NBRC 101917 / NGR234).